A 450-amino-acid polypeptide reads, in one-letter code: tRNA modification GTPase MnmE (450 aa).

(6S)-5-formyl-5,6,7,8-tetrahydrofolate contacts are provided by arginine 23, glutamate 79, and lysine 118. Positions 214–374 (GITLILVGKP…LKEHILNKVG (161 aa)) constitute a TrmE-type G domain. Residue asparagine 224 participates in K(+) binding. GTP contacts are provided by residues 224-229 (NAGKSS), 243-249 (TSIAGTT), and 268-271 (DTAG). A Mg(2+)-binding site is contributed by serine 228. 3 residues coordinate K(+): threonine 243, isoleucine 245, and threonine 248. Threonine 249 is a binding site for Mg(2+). Position 450 (lysine 450) interacts with (6S)-5-formyl-5,6,7,8-tetrahydrofolate.

Belongs to the TRAFAC class TrmE-Era-EngA-EngB-Septin-like GTPase superfamily. TrmE GTPase family. As to quaternary structure, homodimer. Heterotetramer of two MnmE and two MnmG subunits. K(+) serves as cofactor.

The protein resides in the cytoplasm. Its function is as follows. Exhibits a very high intrinsic GTPase hydrolysis rate. Involved in the addition of a carboxymethylaminomethyl (cmnm) group at the wobble position (U34) of certain tRNAs, forming tRNA-cmnm(5)s(2)U34. This is tRNA modification GTPase MnmE from Francisella tularensis subsp. tularensis (strain WY96-3418).